The chain runs to 110 residues: MFGAFRFTNPLSGGLLWKIPWRMSKFQKLRQRRRLRAVDNVVATIENALAKKGETVKAVERWRAEMPTEAEMLPKDKYTIFDRKEKRYRKGIHKLPKWTRVSQRVNPPGY.

Belongs to the mitochondrion-specific ribosomal protein mL60 family. Component of the mitochondrial large ribosomal subunit (mt-LSU). Mature N.crassa 74S mitochondrial ribosomes consist of a small (37S) and a large (54S) subunit. The 37S small subunit contains a 16S ribosomal RNA (16S mt-rRNA) and 32 different proteins. The 54S large subunit contains a 23S rRNA (23S mt-rRNA) and 42 different proteins.

It localises to the mitochondrion. Its function is as follows. Component of the mitochondrial ribosome (mitoribosome), a dedicated translation machinery responsible for the synthesis of mitochondrial genome-encoded proteins, including at least some of the essential transmembrane subunits of the mitochondrial respiratory chain. The mitoribosomes are attached to the mitochondrial inner membrane and translation products are cotranslationally integrated into the membrane. This is Large ribosomal subunit protein mL60 (mrpl31) from Neurospora crassa (strain ATCC 24698 / 74-OR23-1A / CBS 708.71 / DSM 1257 / FGSC 987).